The sequence spans 1532 residues: Glycogen debranching enzyme (1532 aa).

Serine 64 bears the Phosphoserine mark. Residues aspartate 526, histidine 529, and aspartate 627 contribute to the active site.

Belongs to the glycogen debranching enzyme family. Monomer. Interacts with NHLRC1/malin. In terms of processing, the N-terminus is blocked. Post-translationally, ubiquitinated. In terms of tissue distribution, liver, kidney and lymphoblastoid cells express predominantly isoform 1; whereas muscle and heart express not only isoform 1, but also muscle-specific isoform mRNAs (isoforms 2, 3 and 4). Isoforms 5 and 6 are present in both liver and muscle.

The protein resides in the cytoplasm. The catalysed reaction is Transfers a segment of a (1-&gt;4)-alpha-D-glucan to a new position in an acceptor, which may be glucose or a (1-&gt;4)-alpha-D-glucan.. It catalyses the reaction Hydrolysis of (1-&gt;6)-alpha-D-glucosidic branch linkages in glycogen phosphorylase limit dextrin.. Functionally, multifunctional enzyme acting as 1,4-alpha-D-glucan:1,4-alpha-D-glucan 4-alpha-D-glycosyltransferase and amylo-1,6-glucosidase in glycogen degradation. This chain is Glycogen debranching enzyme (AGL), found in Homo sapiens (Human).